A 187-amino-acid polypeptide reads, in one-letter code: Elongation factor P (187 aa).

Belongs to the elongation factor P family.

The protein localises to the cytoplasm. It participates in protein biosynthesis; polypeptide chain elongation. Involved in peptide bond synthesis. Stimulates efficient translation and peptide-bond synthesis on native or reconstituted 70S ribosomes in vitro. Probably functions indirectly by altering the affinity of the ribosome for aminoacyl-tRNA, thus increasing their reactivity as acceptors for peptidyl transferase. The protein is Elongation factor P of Helicobacter acinonychis (strain Sheeba).